Here is a 345-residue protein sequence, read N- to C-terminus: S-adenosylmethionine:tRNA ribosyltransferase-isomerase (345 aa).

Belongs to the QueA family. Monomer.

The protein localises to the cytoplasm. It carries out the reaction 7-aminomethyl-7-carbaguanosine(34) in tRNA + S-adenosyl-L-methionine = epoxyqueuosine(34) in tRNA + adenine + L-methionine + 2 H(+). It participates in tRNA modification; tRNA-queuosine biosynthesis. In terms of biological role, transfers and isomerizes the ribose moiety from AdoMet to the 7-aminomethyl group of 7-deazaguanine (preQ1-tRNA) to give epoxyqueuosine (oQ-tRNA). This Acidiphilium cryptum (strain JF-5) protein is S-adenosylmethionine:tRNA ribosyltransferase-isomerase.